A 293-amino-acid polypeptide reads, in one-letter code: 4-diphosphocytidyl-2-C-methyl-D-erythritol kinase (293 aa).

Residue lysine 16 is part of the active site. 99–109 (PMGAGLGGGSS) provides a ligand contact to ATP. Aspartate 141 is an active-site residue.

It belongs to the GHMP kinase family. IspE subfamily.

The catalysed reaction is 4-CDP-2-C-methyl-D-erythritol + ATP = 4-CDP-2-C-methyl-D-erythritol 2-phosphate + ADP + H(+). The protein operates within isoprenoid biosynthesis; isopentenyl diphosphate biosynthesis via DXP pathway; isopentenyl diphosphate from 1-deoxy-D-xylulose 5-phosphate: step 3/6. Functionally, catalyzes the phosphorylation of the position 2 hydroxy group of 4-diphosphocytidyl-2C-methyl-D-erythritol. This is 4-diphosphocytidyl-2-C-methyl-D-erythritol kinase from Burkholderia cenocepacia (strain HI2424).